An 88-amino-acid polypeptide reads, in one-letter code: Beta-defensin 115 (88 aa).

Positions 1-27 (MLPDHFSPLSGDIKLSVLALVVLVVLA) are cleaved as a signal peptide. Cystine bridges form between C38-C65, C45-C59, and C49-C66.

It belongs to the beta-defensin family.

The protein localises to the secreted. Has antibacterial activity. This chain is Beta-defensin 115 (DEFB115), found in Homo sapiens (Human).